Consider the following 431-residue polypeptide: Argininosuccinate lyase (431 aa).

It belongs to the lyase 1 family. Argininosuccinate lyase subfamily.

It is found in the cytoplasm. It catalyses the reaction 2-(N(omega)-L-arginino)succinate = fumarate + L-arginine. It functions in the pathway amino-acid biosynthesis; L-arginine biosynthesis; L-arginine from L-ornithine and carbamoyl phosphate: step 3/3. The polypeptide is Argininosuccinate lyase (Xanthomonas campestris pv. campestris (strain ATCC 33913 / DSM 3586 / NCPPB 528 / LMG 568 / P 25)).